Consider the following 380-residue polypeptide: Phospho-N-acetylmuramoyl-pentapeptide-transferase (380 aa).

A run of 9 helical transmembrane segments spans residues 25 to 45 (RAAA…PAII), 70 to 90 (TTPT…VLLW), 98 to 118 (VLLA…DDYL), 142 to 162 (VLCG…TLPG), 173 to 193 (VLVV…VTFI), 209 to 229 (GLSS…AYVL), 245 to 265 (GAGE…GFLW), 272 to 294 (QVFM…AILL), and 357 to 377 (QVVV…LSTL).

It belongs to the glycosyltransferase 4 family. MraY subfamily. Mg(2+) serves as cofactor.

The protein localises to the cell inner membrane. The catalysed reaction is UDP-N-acetyl-alpha-D-muramoyl-L-alanyl-gamma-D-glutamyl-meso-2,6-diaminopimeloyl-D-alanyl-D-alanine + di-trans,octa-cis-undecaprenyl phosphate = di-trans,octa-cis-undecaprenyl diphospho-N-acetyl-alpha-D-muramoyl-L-alanyl-D-glutamyl-meso-2,6-diaminopimeloyl-D-alanyl-D-alanine + UMP. It functions in the pathway cell wall biogenesis; peptidoglycan biosynthesis. Its function is as follows. Catalyzes the initial step of the lipid cycle reactions in the biosynthesis of the cell wall peptidoglycan: transfers peptidoglycan precursor phospho-MurNAc-pentapeptide from UDP-MurNAc-pentapeptide onto the lipid carrier undecaprenyl phosphate, yielding undecaprenyl-pyrophosphoryl-MurNAc-pentapeptide, known as lipid I. This is Phospho-N-acetylmuramoyl-pentapeptide-transferase from Gemmatimonas aurantiaca (strain DSM 14586 / JCM 11422 / NBRC 100505 / T-27).